We begin with the raw amino-acid sequence, 352 residues long: Chorismate synthase (352 aa).

Arginine 48 is a binding site for NADP(+). FMN is bound by residues 125-127, 238-239, glycine 278, 293-297, and arginine 319; these read RSS, NA, and KPTSS.

Belongs to the chorismate synthase family. As to quaternary structure, homotetramer. It depends on FMNH2 as a cofactor.

It catalyses the reaction 5-O-(1-carboxyvinyl)-3-phosphoshikimate = chorismate + phosphate. The protein operates within metabolic intermediate biosynthesis; chorismate biosynthesis; chorismate from D-erythrose 4-phosphate and phosphoenolpyruvate: step 7/7. Catalyzes the anti-1,4-elimination of the C-3 phosphate and the C-6 proR hydrogen from 5-enolpyruvylshikimate-3-phosphate (EPSP) to yield chorismate, which is the branch point compound that serves as the starting substrate for the three terminal pathways of aromatic amino acid biosynthesis. This reaction introduces a second double bond into the aromatic ring system. The sequence is that of Chorismate synthase from Legionella pneumophila (strain Paris).